A 46-amino-acid polypeptide reads, in one-letter code: Defensin-like protein AX2 (46 aa).

Intrachain disulfides connect Cys-3/Cys-46, Cys-14/Cys-34, Cys-20/Cys-40, and Cys-24/Cys-42.

As to expression, leaves and flowers.

In terms of biological role, strong inhibiting activity against C.beticola and other filamentous fungi. Little or no effect against bacteria. The polypeptide is Defensin-like protein AX2 (Beta vulgaris (Sugar beet)).